A 486-amino-acid polypeptide reads, in one-letter code: Regulatory protein ViaA (486 aa).

It belongs to the ViaA family. Homodimer. Interacts with RavA.

The protein localises to the cytoplasm. Component of the RavA-ViaA chaperone complex, which may act on the membrane to optimize the function of some of the respiratory chains. ViaA stimulates the ATPase activity of RavA. In Erwinia tasmaniensis (strain DSM 17950 / CFBP 7177 / CIP 109463 / NCPPB 4357 / Et1/99), this protein is Regulatory protein ViaA.